The chain runs to 86 residues: Large ribosomal subunit protein bL31B (86 aa).

It belongs to the bacterial ribosomal protein bL31 family. Type B subfamily. As to quaternary structure, part of the 50S ribosomal subunit.

The protein is Large ribosomal subunit protein bL31B of Salmonella paratyphi A (strain ATCC 9150 / SARB42).